The primary structure comprises 390 residues: 4-hydroxycoumarin synthase 1 (390 aa).

Residue C161 is part of the active site.

Belongs to the thiolase-like superfamily. Chalcone/stilbene synthases family. Homodimer.

It catalyses the reaction 2-hydroxybenzoyl-CoA + malonyl-CoA = 4-hydroxycoumarin + CO2 + 2 CoA. Functionally, type III polyketide synthase involved preferentially in the biosynthesis of 4-hydroxycoumarin from salicoyl-CoA. Can also use benzoyl-CoA and malonyl-CoA to produce 3,5-dihydroxybiphenyl as a major product and benzoyldiacetic acid lactone as a minor side product. Can also use m-hydroxybenzoyl-CoA as substrate, producing m-hydroxybenzoyl diacetic acid lactone as a derailment product. No activity with p-hydroxybenzoyl-CoA, CoA-linked cinnamic acids or acetyl-CoA. The sequence is that of 4-hydroxycoumarin synthase 1 (BIS2) from Sorbus aucuparia (European mountain ash).